The primary structure comprises 422 residues: Probable zinc-type alcohol dehydrogenase-like protein L498 (422 aa).

Positions 108, 129, 160, 163, 166, 174, and 231 each coordinate Zn(2+).

The cofactor is Zn(2+).

It is found in the host cytoplasm. The protein localises to the virion. This is Probable zinc-type alcohol dehydrogenase-like protein L498 from Acanthamoeba polyphaga (Amoeba).